A 320-amino-acid chain; its full sequence is Malate dehydrogenase (320 aa).

NAD(+)-binding positions include Gly-10–Gly-15 and Asp-34. Substrate is bound by residues Arg-83 and Arg-89. Residues Asn-96 and Ile-119–Asn-121 contribute to the NAD(+) site. Substrate contacts are provided by Asn-121 and Arg-152. His-176 serves as the catalytic Proton acceptor.

Belongs to the LDH/MDH superfamily. MDH type 3 family.

It catalyses the reaction (S)-malate + NAD(+) = oxaloacetate + NADH + H(+). Catalyzes the reversible oxidation of malate to oxaloacetate. In Hyphomonas neptunium (strain ATCC 15444), this protein is Malate dehydrogenase.